The sequence spans 191 residues: Phosphoheptose isomerase (191 aa).

The 155-residue stretch at 37 to 191 folds into the SIS domain; it reads IADSFKQDGK…IIQLIEKEME (155 aa). Residue 52–54 participates in substrate binding; sequence NGG. The Zn(2+) site is built by H61 and E65. Substrate is bound by residues E65, 93–94, 119–121, S124, and Q172; these read ND and STS. The Zn(2+) site is built by Q172 and H180.

This sequence belongs to the SIS family. GmhA subfamily. As to quaternary structure, homotetramer. The cofactor is Zn(2+).

The protein localises to the cytoplasm. It carries out the reaction 2 D-sedoheptulose 7-phosphate = D-glycero-alpha-D-manno-heptose 7-phosphate + D-glycero-beta-D-manno-heptose 7-phosphate. It participates in carbohydrate biosynthesis; D-glycero-D-manno-heptose 7-phosphate biosynthesis; D-glycero-alpha-D-manno-heptose 7-phosphate and D-glycero-beta-D-manno-heptose 7-phosphate from sedoheptulose 7-phosphate: step 1/1. Its pathway is bacterial outer membrane biogenesis; LPS core biosynthesis. Functionally, catalyzes the isomerization of sedoheptulose 7-phosphate in D-glycero-D-manno-heptose 7-phosphate. In Vibrio parahaemolyticus serotype O3:K6 (strain RIMD 2210633), this protein is Phosphoheptose isomerase.